A 267-amino-acid chain; its full sequence is 4-hydroxy-tetrahydrodipicolinate reductase (267 aa).

Residues 8-13 (GAAGRM) and Glu34 contribute to the NAD(+) site. Arg35 provides a ligand contact to NADP(+). Residues 98-100 (GST) and 122-125 (APNM) contribute to the NAD(+) site. His155 functions as the Proton donor/acceptor in the catalytic mechanism. His156 serves as a coordination point for (S)-2,3,4,5-tetrahydrodipicolinate. The Proton donor role is filled by Lys159. 165-166 (GT) is a (S)-2,3,4,5-tetrahydrodipicolinate binding site.

This sequence belongs to the DapB family.

It localises to the cytoplasm. The enzyme catalyses (S)-2,3,4,5-tetrahydrodipicolinate + NAD(+) + H2O = (2S,4S)-4-hydroxy-2,3,4,5-tetrahydrodipicolinate + NADH + H(+). It catalyses the reaction (S)-2,3,4,5-tetrahydrodipicolinate + NADP(+) + H2O = (2S,4S)-4-hydroxy-2,3,4,5-tetrahydrodipicolinate + NADPH + H(+). It participates in amino-acid biosynthesis; L-lysine biosynthesis via DAP pathway; (S)-tetrahydrodipicolinate from L-aspartate: step 4/4. In terms of biological role, catalyzes the conversion of 4-hydroxy-tetrahydrodipicolinate (HTPA) to tetrahydrodipicolinate. The sequence is that of 4-hydroxy-tetrahydrodipicolinate reductase from Citrifermentans bemidjiense (strain ATCC BAA-1014 / DSM 16622 / JCM 12645 / Bem) (Geobacter bemidjiensis).